Consider the following 160-residue polypeptide: Prostaglandin E synthase 3 (160 aa).

Positions 1-90 (MQPASAKWYD…ESGQSWPRLT (90 aa)) constitute a CS domain. Lysine 33 bears the N6-acetyllysine mark. Residue lysine 35 forms a Glycyl lysine isopeptide (Lys-Gly) (interchain with G-Cter in SUMO2) linkage. Residue serine 44 is modified to Phosphoserine. Lysine 65 participates in a covalent cross-link: Glycyl lysine isopeptide (Lys-Gly) (interchain with G-Cter in SUMO2). Phosphoserine is present on residues serine 85, serine 100, serine 113, and serine 118. A disordered region spans residues 118 to 160 (SNFDRFSEMMDHMGGDEDVDLPEVDGADDDSQDSDDEKMPDLE). Over residues 122 to 132 (RFSEMMDHMGG) the composition is skewed to basic and acidic residues. The segment covering 133 to 153 (DEDVDLPEVDGADDDSQDSDD) has biased composition (acidic residues). Residues serine 148 and serine 151 each carry the phosphoserine modification. The PXLE motif motif lies at 157-160 (PDLE).

Belongs to the p23/wos2 family. As to quaternary structure, probably forms a complex composed of chaperones HSP90 and HSP70, co-chaperones STIP1/HOP, CDC37, PPP5C, PTGES3/p23, TSC1 and client protein TSC2. Binds to the progesterone receptor. Interacts with TERT; the interaction, together with HSP90AA1, is required for correct assembly and stabilization of the telomerase holoenzyme complex. Interacts (via PXLE motif) with EGLN1/PHD2, recruiting EGLN1/PHD2 to the HSP90 pathway to facilitate HIF alpha proteins hydroxylation. Interacts with HSP90AA1, FLCN, FNIP1 and FNIP2. Post-translationally, proteolytically cleaved by caspase-7 (CASP7) in response to apoptosis, leading to its inactivation. Expressed in testis, kidney, bladder and ovary.

It is found in the cytoplasm. It catalyses the reaction prostaglandin H2 = prostaglandin E2. The protein operates within lipid metabolism; prostaglandin biosynthesis. Functionally, cytosolic prostaglandin synthase that catalyzes the oxidoreduction of prostaglandin endoperoxide H2 (PGH2) to prostaglandin E2 (PGE2). Molecular chaperone that localizes to genomic response elements in a hormone-dependent manner and disrupts receptor-mediated transcriptional activation, by promoting disassembly of transcriptional regulatory complexes. Facilitates HIF alpha proteins hydroxylation via interaction with EGLN1/PHD2, leading to recruit EGLN1/PHD2 to the HSP90 pathway. This is Prostaglandin E synthase 3 (Ptges3) from Mus musculus (Mouse).